A 179-amino-acid polypeptide reads, in one-letter code: Large ribosomal subunit protein uL5 (179 aa).

It belongs to the universal ribosomal protein uL5 family. As to quaternary structure, part of the 50S ribosomal subunit; part of the 5S rRNA/L5/L18/L25 subcomplex. Contacts the 5S rRNA and the P site tRNA. Forms a bridge to the 30S subunit in the 70S ribosome.

Functionally, this is one of the proteins that bind and probably mediate the attachment of the 5S RNA into the large ribosomal subunit, where it forms part of the central protuberance. In the 70S ribosome it contacts protein S13 of the 30S subunit (bridge B1b), connecting the 2 subunits; this bridge is implicated in subunit movement. Contacts the P site tRNA; the 5S rRNA and some of its associated proteins might help stabilize positioning of ribosome-bound tRNAs. This Citrobacter koseri (strain ATCC BAA-895 / CDC 4225-83 / SGSC4696) protein is Large ribosomal subunit protein uL5.